The chain runs to 407 residues: Extracellular superoxide dismutase [Cu-Zn] 3 (407 aa).

The signal sequence occupies residues 1–19; it reads MRLLSVLVFLISVISIAKA. At 20–386 the chain is on the extracellular side; the sequence is DYQYAFCKFN…SESYNDNEPG (367 aa). N-linked (GlcNAc...) asparagine glycans are attached at residues Asn-51, Asn-205, and Asn-224. The Cu cation site is built by His-245 and His-247. A glycan (N-linked (GlcNAc...) asparagine) is linked at Asn-256. His-263 is a binding site for Cu cation. Residues His-263, His-271, His-280, and Asp-283 each contribute to the Zn(2+) site. Position 320 (His-320) interacts with Cu cation. 2 N-linked (GlcNAc...) asparagine glycosylation sites follow: Asn-321 and Asn-364. The chain crosses the membrane as a helical span at residues 387–406; that stretch reads SSSTVIPFFALIIFSIIFAL. A topological domain (cytoplasmic) is located at residue Leu-407.

Belongs to the Cu-Zn superoxide dismutase family. It depends on Cu cation as a cofactor. Requires Zn(2+) as cofactor.

The protein resides in the cell membrane. The catalysed reaction is 2 superoxide + 2 H(+) = H2O2 + O2. Protect the extracellular space from toxic effect of reactive oxygen intermediates by converting superoxyde radicals into hydrogen peroxyde and oxygen. This chain is Extracellular superoxide dismutase [Cu-Zn] 3 (sodC), found in Dictyostelium discoideum (Social amoeba).